We begin with the raw amino-acid sequence, 302 residues long: tRNA pseudouridine synthase B (302 aa).

The active-site Nucleophile is Asp43.

It belongs to the pseudouridine synthase TruB family. Type 1 subfamily.

The catalysed reaction is uridine(55) in tRNA = pseudouridine(55) in tRNA. Functionally, responsible for synthesis of pseudouridine from uracil-55 in the psi GC loop of transfer RNAs. The polypeptide is tRNA pseudouridine synthase B (Burkholderia mallei (strain NCTC 10247)).